Here is a 373-residue protein sequence, read N- to C-terminus: Bifunctional enzyme IspD/IspF (373 aa).

The 2-C-methyl-D-erythritol 4-phosphate cytidylyltransferase stretch occupies residues 1-212 (MPDITLILLG…PCIEAPSGKT (212 aa)). A 2-C-methyl-D-erythritol 2,4-cyclodiphosphate synthase region spans residues 213 to 373 (LTGFGLDIHP…NLTYYNWKQK (161 aa)). 2 residues coordinate a divalent metal cation: Asp-219 and His-221. 4-CDP-2-C-methyl-D-erythritol 2-phosphate-binding positions include 219 to 221 (DIH) and 245 to 246 (HS). His-253 contributes to the a divalent metal cation binding site. 4-CDP-2-C-methyl-D-erythritol 2-phosphate-binding positions include 267–269 (DIG), 272–276 (YPDTD), 343–346 (TTAE), Phe-350, and Arg-353.

The protein in the N-terminal section; belongs to the IspD/TarI cytidylyltransferase family. IspD subfamily. In the C-terminal section; belongs to the IspF family. The cofactor is a divalent metal cation.

It catalyses the reaction 2-C-methyl-D-erythritol 4-phosphate + CTP + H(+) = 4-CDP-2-C-methyl-D-erythritol + diphosphate. It carries out the reaction 4-CDP-2-C-methyl-D-erythritol 2-phosphate = 2-C-methyl-D-erythritol 2,4-cyclic diphosphate + CMP. It functions in the pathway isoprenoid biosynthesis; isopentenyl diphosphate biosynthesis via DXP pathway; isopentenyl diphosphate from 1-deoxy-D-xylulose 5-phosphate: step 2/6. Its pathway is isoprenoid biosynthesis; isopentenyl diphosphate biosynthesis via DXP pathway; isopentenyl diphosphate from 1-deoxy-D-xylulose 5-phosphate: step 4/6. In terms of biological role, bifunctional enzyme that catalyzes the formation of 4-diphosphocytidyl-2-C-methyl-D-erythritol from CTP and 2-C-methyl-D-erythritol 4-phosphate (MEP) (IspD), and catalyzes the conversion of 4-diphosphocytidyl-2-C-methyl-D-erythritol 2-phosphate (CDP-ME2P) to 2-C-methyl-D-erythritol 2,4-cyclodiphosphate (ME-CPP) with a corresponding release of cytidine 5-monophosphate (CMP) (IspF). The polypeptide is Bifunctional enzyme IspD/IspF (Sulfurovum sp. (strain NBC37-1)).